We begin with the raw amino-acid sequence, 162 residues long: Shikimate kinase (162 aa).

10-15 (GAGKST) is a binding site for ATP. Ser-14 contacts Mg(2+). Residues Asp-28, Arg-52, and Gly-73 each coordinate substrate. Arg-113 is a binding site for ATP. Residue Arg-129 coordinates substrate.

The protein belongs to the shikimate kinase family. In terms of assembly, monomer. Mg(2+) serves as cofactor.

The protein localises to the cytoplasm. It catalyses the reaction shikimate + ATP = 3-phosphoshikimate + ADP + H(+). It functions in the pathway metabolic intermediate biosynthesis; chorismate biosynthesis; chorismate from D-erythrose 4-phosphate and phosphoenolpyruvate: step 5/7. Functionally, catalyzes the specific phosphorylation of the 3-hydroxyl group of shikimic acid using ATP as a cosubstrate. The protein is Shikimate kinase of Lactococcus lactis subsp. cremoris (strain MG1363).